The primary structure comprises 353 residues: Phosphate acyltransferase (353 aa).

The protein belongs to the PlsX family. As to quaternary structure, homodimer. Probably interacts with PlsY.

The protein resides in the cytoplasm. It catalyses the reaction a fatty acyl-[ACP] + phosphate = an acyl phosphate + holo-[ACP]. The protein operates within lipid metabolism; phospholipid metabolism. Its function is as follows. Catalyzes the reversible formation of acyl-phosphate (acyl-PO(4)) from acyl-[acyl-carrier-protein] (acyl-ACP). This enzyme utilizes acyl-ACP as fatty acyl donor, but not acyl-CoA. The chain is Phosphate acyltransferase from Myxococcus xanthus (strain DK1622).